Here is a 200-residue protein sequence, read N- to C-terminus: Nascent polypeptide-associated complex subunit alpha (200 aa).

Positions 1 to 19 (MADPRIEELPDEETKKPTV) are enriched in basic and acidic residues. Disordered stretches follow at residues 1–52 (MADP…SRNE) and 120–165 (QQLA…EDKD). The segment covering 20-34 (EELDESSDEESDAEA) has biased composition (acidic residues). The NAC-A/B domain occupies 49-114 (SRNEKKARKA…AKIEDLNASA (66 aa)). The span at 127–143 (AEHDHAGHTHDHKHEAA) shows a compositional bias: basic and acidic residues. The span at 144-160 (KEEEEEEDDGEEVDAEG) shows a compositional bias: acidic residues. The UBA domain occupies 161 to 200 (IEDKDIELVMTQANVSRKKAIKALKENDNDIVNSIMALSV).

It belongs to the NAC-alpha family. In terms of assembly, part of the nascent polypeptide-associated complex (NAC), consisting of EGD2 and EGD1. NAC associates with ribosomes via EGD1.

The protein localises to the cytoplasm. It is found in the nucleus. Its function is as follows. Component of the nascent polypeptide-associated complex (NAC), a dynamic component of the ribosomal exit tunnel, protecting the emerging polypeptides from interaction with other cytoplasmic proteins to ensure appropriate nascent protein targeting. The NAC complex also promotes mitochondrial protein import by enhancing productive ribosome interactions with the outer mitochondrial membrane and blocks the inappropriate interaction of ribosomes translating non-secretory nascent polypeptides with translocation sites in the membrane of the endoplasmic reticulum. EGD2 may also be involved in transcription regulation. The sequence is that of Nascent polypeptide-associated complex subunit alpha (EGD2) from Chaetomium globosum (strain ATCC 6205 / CBS 148.51 / DSM 1962 / NBRC 6347 / NRRL 1970) (Soil fungus).